Here is a 138-residue protein sequence, read N- to C-terminus: Putative pre-16S rRNA nuclease (138 aa).

It belongs to the YqgF nuclease family.

Its subcellular location is the cytoplasm. Could be a nuclease involved in processing of the 5'-end of pre-16S rRNA. This Clostridium beijerinckii (strain ATCC 51743 / NCIMB 8052) (Clostridium acetobutylicum) protein is Putative pre-16S rRNA nuclease.